A 178-amino-acid polypeptide reads, in one-letter code: ATP synthase subunit delta (178 aa).

It belongs to the ATPase delta chain family. As to quaternary structure, F-type ATPases have 2 components, F(1) - the catalytic core - and F(0) - the membrane proton channel. F(1) has five subunits: alpha(3), beta(3), gamma(1), delta(1), epsilon(1). F(0) has three main subunits: a(1), b(2) and c(10-14). The alpha and beta chains form an alternating ring which encloses part of the gamma chain. F(1) is attached to F(0) by a central stalk formed by the gamma and epsilon chains, while a peripheral stalk is formed by the delta and b chains.

It is found in the cell inner membrane. F(1)F(0) ATP synthase produces ATP from ADP in the presence of a proton or sodium gradient. F-type ATPases consist of two structural domains, F(1) containing the extramembraneous catalytic core and F(0) containing the membrane proton channel, linked together by a central stalk and a peripheral stalk. During catalysis, ATP synthesis in the catalytic domain of F(1) is coupled via a rotary mechanism of the central stalk subunits to proton translocation. Its function is as follows. This protein is part of the stalk that links CF(0) to CF(1). It either transmits conformational changes from CF(0) to CF(1) or is implicated in proton conduction. The sequence is that of ATP synthase subunit delta from Nitrosomonas eutropha (strain DSM 101675 / C91 / Nm57).